The chain runs to 705 residues: Elongation factor G (705 aa).

Positions 8-291 (EKVRNIGIMA…AVVEYLPSPI (284 aa)) constitute a tr-type G domain. GTP-binding positions include 17 to 24 (AHIDAGKT), 90 to 94 (DTPGH), and 144 to 147 (NKMD).

This sequence belongs to the TRAFAC class translation factor GTPase superfamily. Classic translation factor GTPase family. EF-G/EF-2 subfamily.

The protein localises to the cytoplasm. Functionally, catalyzes the GTP-dependent ribosomal translocation step during translation elongation. During this step, the ribosome changes from the pre-translocational (PRE) to the post-translocational (POST) state as the newly formed A-site-bound peptidyl-tRNA and P-site-bound deacylated tRNA move to the P and E sites, respectively. Catalyzes the coordinated movement of the two tRNA molecules, the mRNA and conformational changes in the ribosome. In Chloroherpeton thalassium (strain ATCC 35110 / GB-78), this protein is Elongation factor G.